The primary structure comprises 429 residues: Ribosomal RNA small subunit methyltransferase B (429 aa).

Residues 254–260, D277, D303, and D322 contribute to the S-adenosyl-L-methionine site; that span reads CAAPGGK. C375 serves as the catalytic Nucleophile.

The protein belongs to the class I-like SAM-binding methyltransferase superfamily. RsmB/NOP family.

Its subcellular location is the cytoplasm. The enzyme catalyses cytidine(967) in 16S rRNA + S-adenosyl-L-methionine = 5-methylcytidine(967) in 16S rRNA + S-adenosyl-L-homocysteine + H(+). Functionally, specifically methylates the cytosine at position 967 (m5C967) of 16S rRNA. The sequence is that of Ribosomal RNA small subunit methyltransferase B from Escherichia coli (strain SE11).